The chain runs to 111 residues: uncharacterized protein (111 aa).

This is an uncharacterized protein from Schizosaccharomyces pombe (strain 972 / ATCC 24843) (Fission yeast).